Here is a 68-residue protein sequence, read N- to C-terminus: Large ribosomal subunit protein bL33c (68 aa).

It belongs to the bacterial ribosomal protein bL33 family.

The protein resides in the plastid. This Cuscuta exaltata (Tall dodder) protein is Large ribosomal subunit protein bL33c.